The primary structure comprises 626 residues: Basic helix-loop-helix ARNT-like protein 1 (626 aa).

Residues 1–58 (MADQRMDISSTISDFMSPGPTDLLSGSLSTSGVDCNRKRKGSATDYQESMDTDKDDPH) form a disordered region. Ser17 is subject to Phosphoserine; by GSK3-beta. A compositionally biased stretch (low complexity) spans 17-32 (SPGPTDLLSGSLSTSG). Thr21 carries the phosphothreonine; by GSK3-beta modification. Residues 36–41 (NRKRKG) carry the Nuclear localization signal motif. In terms of domain architecture, bHLH spans 72–125 (NAREAHSQIEKRRRDKMNSFIDELASLVPTCNAMSRKLDKLTVLRMAVQHMKTL). A Phosphoserine modification is found at Ser78. Ser90 carries the post-translational modification Phosphoserine; by CK2. Residues 142-152 (LSDDELKHLIL) carry the Nuclear export signal 1 motif. Residues 143 to 215 (SDDELKHLIL…EQLSSSDTAP (73 aa)) enclose the PAS 1 domain. Lys252 participates in a covalent cross-link: Glycyl lysine isopeptide (Lys-Gly) (interchain with G-Cter in SUMO2 and SUMO3). Residue Lys259 forms a Glycyl lysine isopeptide (Lys-Gly) (interchain with G-Cter in SUMO); alternate linkage. Lys259 participates in a covalent cross-link: Glycyl lysine isopeptide (Lys-Gly) (interchain with G-Cter in SUMO2); alternate. Residues 326–396 (PQPVNGEIRV…ECHRQVLQTR (71 aa)) form the PAS 2 domain. The Nuclear export signal 2 signature appears at 361–369 (LAYLPQELL). Positions 401–444 (TNCYKFKIKDGSFITLRSRWFSFMNPWTKEVEYIVSTNTVVLAN) constitute a PAC domain. 2 disordered regions span residues 459–492 (SPHSMDSMLPSGEGGPKRTHPTVPGIPGGTRAGA) and 511–595 (GSSP…SPSN). The segment at 508–588 (RIRGSSPSSC…IGIDMIDNDQ (81 aa)) is interaction with CIART. Residues 511 to 521 (GSSPSSCGSSP) show a composition bias toward low complexity. Lys538 carries the post-translational modification N6-acetyllysine.

In terms of assembly, component of the circadian clock oscillator which includes the CRY1/2 proteins, CLOCK or NPAS2, BMAL1 or BMAL2, CSNK1D and/or CSNK1E, TIMELESS and the PER1/2/3 proteins. Forms a heterodimer with CLOCK. The CLOCK-BMAL1 heterodimer is required for E-box-dependent transactivation, for CLOCK nuclear translocation and degradation, and, for phosphorylation of both CLOCK and BMAL1. Part of a nuclear complex which also includes RACK1 and PRKCA; RACK1 and PRKCA are recruited to the complex in a circadian manner. Interacts with NPAS2. Interacts with EZH2. Interacts with SUMO3. Interacts with SIRT1. Interacts with AHR. Interacts with ID1, ID2 and ID3. Interacts with DDX4. Interacts with OGT. Interacts with EED and SUZ12. Interacts with MTA1. Interacts with CIART. Interacts with HSP90. Interacts with KAT2B and EP300. Interacts with BHLHE40/DEC1 and BHLHE41/DEC2. Interacts with RELB and the interaction is enhanced in the presence of CLOCK. Interacts with PER1, PER2, CRY1 and CRY2 and this interaction requires a translocation to the nucleus. Interaction of the CLOCK-BMAL1 heterodimer with PER or CRY inhibits transcription activation. Interaction of the CLOCK-BMAL1 with CRY1 is independent of DNA but with PER2 is off DNA. The CLOCK-BMAL1 heterodimer interacts with GSK3B. Interacts with KDM5A. Interacts with KMT2A; in a circadian manner. Interacts with UBE3A. Interacts with PRKCG. Interacts with MAGEL2. Interacts with NCOA2. Interacts with THRAP3. The CLOCK-BMAL1 heterodimer interacts with PASD1. Interacts with PASD1. Interacts with USP9X. Interacts with PIWIL2 (via PIWI domain). Interacts with HDAC3. Interacts with HNF4A. Ubiquitinated, leading to its proteasomal degradation. Deubiquitinated by USP9X. Post-translationally, O-glycosylated; contains O-GlcNAc. O-glycosylation by OGT prevents protein degradation by inhibiting ubiquitination. It also stabilizes the CLOCK-BMAL1 heterodimer thereby increasing CLOCK-BMAL1-mediated transcription of genes in the negative loop of the circadian clock such as PER1/2/3 and CRY1/2. In terms of processing, acetylated on Lys-538 by CLOCK during the repression phase of the circadian cycle. Acetylation facilitates recruitment of CRY1 protein and initiates the repression phase of the circadian cycle. Acetylated at Lys-538 by KAT5 during the activation phase of the cycle, leading to recruitment of the positive transcription elongation factor b (P-TEFb) and BRD4, followed by productive elongation of circadian transcripts. Deacetylated by SIRT1, which may result in decreased protein stability. Phosphorylated upon dimerization with CLOCK. Phosphorylation enhances the transcriptional activity, alters the subcellular localization and decreases the stability of the CLOCK-BMAL1 heterodimer by promoting its degradation. Phosphorylation shows circadian variations in the liver with a peak between CT10 to CT14. Phosphorylation at Ser-90 by CK2 is essential for its nuclear localization, its interaction with CLOCK and controls CLOCK nuclear entry. Dephosphorylation at Ser-78 is important for dimerization with CLOCK and transcriptional activity. Post-translationally, sumoylated on Lys-259 upon dimerization with CLOCK. Predominantly conjugated to poly-SUMO2/3 rather than SUMO1 and the level of these conjugates undergo rhythmic variation, peaking at CT9-CT12. Sumoylation localizes it exclusively to the PML body and promotes its ubiquitination in the PML body, ubiquitin-dependent proteasomal degradation and the transcriptional activity of the CLOCK-BMAL1 heterodimer. In terms of processing, undergoes lysosome-mediated degradation in a time-dependent manner in the liver.

Its subcellular location is the nucleus. The protein resides in the cytoplasm. It is found in the PML body. Its function is as follows. Transcriptional activator which forms a core component of the circadian clock. The circadian clock, an internal time-keeping system, regulates various physiological processes through the generation of approximately 24 hour circadian rhythms in gene expression, which are translated into rhythms in metabolism and behavior. It is derived from the Latin roots 'circa' (about) and 'diem' (day) and acts as an important regulator of a wide array of physiological functions including metabolism, sleep, body temperature, blood pressure, endocrine, immune, cardiovascular, and renal function. Consists of two major components: the central clock, residing in the suprachiasmatic nucleus (SCN) of the brain, and the peripheral clocks that are present in nearly every tissue and organ system. Both the central and peripheral clocks can be reset by environmental cues, also known as Zeitgebers (German for 'timegivers'). The predominant Zeitgeber for the central clock is light, which is sensed by retina and signals directly to the SCN. The central clock entrains the peripheral clocks through neuronal and hormonal signals, body temperature and feeding-related cues, aligning all clocks with the external light/dark cycle. Circadian rhythms allow an organism to achieve temporal homeostasis with its environment at the molecular level by regulating gene expression to create a peak of protein expression once every 24 hours to control when a particular physiological process is most active with respect to the solar day. Transcription and translation of core clock components (CLOCK, NPAS2, BMAL1, BMAL2, PER1, PER2, PER3, CRY1 and CRY2) plays a critical role in rhythm generation, whereas delays imposed by post-translational modifications (PTMs) are important for determining the period (tau) of the rhythms (tau refers to the period of a rhythm and is the length, in time, of one complete cycle). A diurnal rhythm is synchronized with the day/night cycle, while the ultradian and infradian rhythms have a period shorter and longer than 24 hours, respectively. Disruptions in the circadian rhythms contribute to the pathology of cardiovascular diseases, cancer, metabolic syndromes and aging. A transcription/translation feedback loop (TTFL) forms the core of the molecular circadian clock mechanism. Transcription factors, CLOCK or NPAS2 and BMAL1 or BMAL2, form the positive limb of the feedback loop, act in the form of a heterodimer and activate the transcription of core clock genes and clock-controlled genes (involved in key metabolic processes), harboring E-box elements (5'-CACGTG-3') within their promoters. The core clock genes: PER1/2/3 and CRY1/2 which are transcriptional repressors form the negative limb of the feedback loop and interact with the CLOCK|NPAS2-BMAL1|BMAL2 heterodimer inhibiting its activity and thereby negatively regulating their own expression. This heterodimer also activates nuclear receptors NR1D1/2 and RORA/B/G, which form a second feedback loop and which activate and repress BMAL1 transcription, respectively. BMAL1 positively regulates myogenesis and negatively regulates adipogenesis via the transcriptional control of the genes of the canonical Wnt signaling pathway. Plays a role in normal pancreatic beta-cell function; regulates glucose-stimulated insulin secretion via the regulation of antioxidant genes NFE2L2/NRF2 and its targets SESN2, PRDX3, CCLC and CCLM. Negatively regulates the mTORC1 signaling pathway; regulates the expression of MTOR and DEPTOR. Controls diurnal oscillations of Ly6C inflammatory monocytes; rhythmic recruitment of the PRC2 complex imparts diurnal variation to chemokine expression that is necessary to sustain Ly6C monocyte rhythms. Regulates the expression of HSD3B2, STAR, PTGS2, CYP11A1, CYP19A1 and LHCGR in the ovary and also the genes involved in hair growth. Plays an important role in adult hippocampal neurogenesis by regulating the timely entry of neural stem/progenitor cells (NSPCs) into the cell cycle and the number of cell divisions that take place prior to cell-cycle exit. Regulates the circadian expression of CIART and KLF11. The CLOCK-BMAL1 heterodimer regulates the circadian expression of SERPINE1/PAI1, VWF, B3, CCRN4L/NOC, NAMPT, DBP, MYOD1, PPARGC1A, PPARGC1B, SIRT1, GYS2, F7, NGFR, GNRHR, BHLHE40/DEC1, ATF4, MTA1, KLF10 and also genes implicated in glucose and lipid metabolism. Promotes rhythmic chromatin opening, regulating the DNA accessibility of other transcription factors. May play a role in spermatogenesis; contributes to the chromatoid body assembly and physiology. The NPAS2-BMAL1 heterodimer positively regulates the expression of MAOA, F7 and LDHA and modulates the circadian rhythm of daytime contrast sensitivity by regulating the rhythmic expression of adenylate cyclase type 1 (ADCY1) in the retina. The preferred binding motif for the CLOCK-BMAL1 heterodimer is 5'-CACGTGA-3', which contains a flanking adenine nucleotide at the 3-prime end of the canonical 6-nucleotide E-box sequence. CLOCK specifically binds to the half-site 5'-CAC-3', while BMAL1 binds to the half-site 5'-GTGA-3'. The CLOCK-BMAL1 heterodimer also recognizes the non-canonical E-box motifs 5'-AACGTGA-3' and 5'-CATGTGA-3'. Essential for the rhythmic interaction of CLOCK with ASS1 and plays a critical role in positively regulating CLOCK-mediated acetylation of ASS1. Plays a role in protecting against lethal sepsis by limiting the expression of immune checkpoint protein CD274 in macrophages in a PKM2-dependent manner. Regulates the diurnal rhythms of skeletal muscle metabolism via transcriptional activation of genes promoting triglyceride synthesis (DGAT2) and metabolic efficiency (COQ10B). The chain is Basic helix-loop-helix ARNT-like protein 1 from Rattus norvegicus (Rat).